The primary structure comprises 283 residues: (+)-O-methylkolavelool synthase (283 aa).

S-adenosyl-L-methionine contacts are provided by residues glutamine 106, 129 to 130, and histidine 151; that span reads NA.

This sequence belongs to the methyltransferase superfamily.

The catalysed reaction is (+)-kolavelool + S-adenosyl-L-methionine = (+)-O-methylkolavelool + S-adenosyl-L-homocysteine + H(+). Its function is as follows. Involved in the biosynthesis of the diterpene (+)-O-methylkolavelool. Catalyzes the transfer of a methyl group from S-adenosyl-L-methionine to the hydroxy group of (+)-kolavelool, forming (+)-O-methylkolavelool. In Herpetosiphon aurantiacus (strain ATCC 23779 / DSM 785 / 114-95), this protein is (+)-O-methylkolavelool synthase.